The chain runs to 669 residues: Cytokinesis protein 2 (669 aa).

Residues 1–261 (MSYSYEACFW…HLNSFTAADE (261 aa)) form the F-BAR domain. The stretch at 134 to 200 (KKGCEVLQKK…LKQEYKASQK (67 aa)) forms a coiled coil. Ser337 and Ser366 each carry phosphoserine. A disordered region spans residues 372–518 (VQLQSNVDDS…DYNTRRDTST (147 aa)). 2 stretches are compositionally biased toward basic and acidic residues: residues 381 to 391 (SVLRQKPDKPR) and 397 to 413 (EQLK…EKGL). Ser421 carries the post-translational modification Phosphoserine. Low complexity-rich tracts occupy residues 421–431 (SLSSPSESSSS) and 445–455 (MESMTTSVSSM). Residues 599–667 (PVIEYAKAMY…PYNFIQLLHQ (69 aa)) form the SH3 domain.

In terms of assembly, interacts with INN1.

Its subcellular location is the cytoplasm. The protein localises to the cytoskeleton. It localises to the bud neck. Its function is as follows. Throughout most of the cell cycle it forms a double ring that coincides with the septins. After the onset of mitosis, forms a ring-like structure which colocalizes with the medial actin ring. Mediates cytoskeletal rearrangements required for cytokinesis. In conjunction with the medial actin ring exhibits contraction-like action. This is Cytokinesis protein 2 (HOF1) from Saccharomyces cerevisiae (strain ATCC 204508 / S288c) (Baker's yeast).